Here is a 178-residue protein sequence, read N- to C-terminus: Large ribosomal subunit protein uL13m (178 aa).

It belongs to the universal ribosomal protein uL13 family. Component of the mitochondrial ribosome large subunit (39S) which comprises a 16S rRNA and about 50 distinct proteins.

It is found in the mitochondrion. In Drosophila melanogaster (Fruit fly), this protein is Large ribosomal subunit protein uL13m (mRpL13).